Reading from the N-terminus, the 87-residue chain is HssA/B-like protein 54 (87 aa).

The protein belongs to the hssA/B family.

The polypeptide is HssA/B-like protein 54 (hssl54) (Dictyostelium discoideum (Social amoeba)).